The following is a 161-amino-acid chain: Globin CTT-VIIB-10 (161 aa).

Residues 1–16 form the signal peptide; it reads MKFFAVLALCIVGAIA. Residues 18–161 enclose the Globin domain; it reads PLTADEASLV…NTFAIVVPRL (144 aa). Heme b contacts are provided by His-76 and His-111.

It belongs to the globin family. In terms of assembly, homodimer.

The sequence is that of Globin CTT-VIIB-10 (CTT-7B10) from Chironomus thummi thummi (Midge).